The sequence spans 440 residues: Chromosome partition protein MukF (440 aa).

The segment at 208–236 is leucine-zipper; that stretch reads LSETSGTLRELQDTLEAAGDKLQANLLRI.

It belongs to the MukF family. In terms of assembly, interacts, and probably forms a ternary complex, with MukE and MukB via its C-terminal region. The complex formation is stimulated by calcium or magnesium. It is required for an interaction between MukE and MukB.

It is found in the cytoplasm. The protein localises to the nucleoid. Involved in chromosome condensation, segregation and cell cycle progression. May participate in facilitating chromosome segregation by condensation DNA from both sides of a centrally located replisome during cell division. Not required for mini-F plasmid partitioning. Probably acts via its interaction with MukB and MukE. Overexpression results in anucleate cells. It has a calcium binding activity. This chain is Chromosome partition protein MukF, found in Salmonella arizonae (strain ATCC BAA-731 / CDC346-86 / RSK2980).